Consider the following 539-residue polypeptide: Nucleobase-ascorbate transporter 8 (539 aa).

Residues 1–20 (MAGDGVENAKPPQKQEDLQP) form a disordered region. 12 helical membrane-spanning segments follow: residues 44 to 64 (ILLGFQHYLVMLGTTVLIPTM), 79 to 99 (LIQTLLFVSGINTLFQSFFGT), 101 to 121 (LPAVIGASYSYVPTTMSIVLA), 141 to 161 (IQGALIIASFLHILVGFSGLW), 167 to 187 (FLSPLSAVPLVAFSGFGLYEQ), 189 to 209 (FPMLAKCIEIGLPEIILLVIF), 229 to 249 (FAVIFSVVIVWLYAYILTIGG), 295 to 315 (IFAMMAASFVSLVESTGTYIA), 368 to 388 (VGSRRVIQVAAGFMIFFSILG), 399 to 421 (APIVAALYCLFFSYVGAGGLSLI), 433 to 453 (FILGFSIFMGLSIPQYFYQYT), and 470 to 490 (NIINVPFSSKAFVSGILAFFL).

The protein belongs to the nucleobase:cation symporter-2 (NCS2) (TC 2.A.40) family. In terms of tissue distribution, highly expressed in ovules, endosperm and embryo.

It localises to the cell membrane. This chain is Nucleobase-ascorbate transporter 8 (NAT8), found in Arabidopsis thaliana (Mouse-ear cress).